The chain runs to 2667 residues: eIF-2-alpha kinase activator GCN1 (2667 aa).

HEAT repeat units lie at residues 19–56 (DSFY…HELS), 95–132 (QWIF…VKFT), 159–198 (SFSL…LQHM), 293–330 (DLQS…DFNV), 336–375 (LLKS…RSKD), 398–439 (SQKL…SISI), 466–503 (ELPE…PEAN), and 794–832 (LLNE…ELFV). Residues 842–879 (RNDRKVKPKTAEEQRDEESRKRIEEKKKIQSGELEKQE) are disordered. HEAT repeat units follow at residues 929 to 967 (PIIV…LDRS), 985 to 1024 (LSEI…IIKN), 1085 to 1122 (GVET…IYSP), 1199 to 1237 (HMIP…ATAL), 1290 to 1330 (GELL…HMDA), 1333 to 1370 (PKVS…SFKK), 1371 to 1407 (QGDR…VKGL), 1412 to 1450 (LKNY…TIGR), 1454 to 1491 (PYII…QLSG), 1492 to 1529 (HGVK…CAPK), 1533 to 1570 (SCLP…VIRN), 1572 to 1608 (EIQI…HTID), 1610 to 1647 (ASLS…LTEP), 1652 to 1689 (PYLN…GMGE), 1691 to 1728 (NFST…SLDI), 1729 to 1766 (SRFN…SLGD), 1770 to 1807 (PYLP…QFAV), and 1809 to 1845 (GIEV…KLAG). Residues 1853–1875 (SNNSSYNAKDDDDDEPGSSGNDI) form a disordered region. HEAT repeat units lie at residues 1882 to 1919 (ERLG…NTPK), 1923 to 1960 (EILP…KLSD), 1962 to 1998 (ILPE…SAKT), 2002 to 2039 (PYLS…TFGS), 2040 to 2078 (KASN…VRSS), 2080 to 2110 (VLPV…DAGE), 2114 to 2152 (VHLS…SIDE), 2154 to 2190 (GWDT…GNTM), 2193 to 2230 (EYPE…SLKK), and 2264 to 2301 (KGLA…HTSA). The interval 2265-2412 (GLASVLPVLI…ISQESKLRAL (148 aa)) is RWDBD region. An HEAT 37; degenerate repeat occupies 2326-2348 (QVKSAILQTLSLLISKSPASMKI). The stretch at 2349-2385 (FLHQLQPTFIKCLSDSHKNVRTNAASALGLLMTLSSS) is one HEAT 38; degenerate repeat. HEAT repeat units lie at residues 2387–2421 (DQLV…KKPK), 2425–2462 (ATLD…CFTS), 2508–2545 (PNMP…ASPL), and 2546–2583 (TYAK…SNQQ).

The protein belongs to the GCN1 family. Interacts with eif2ak4/gcn2; this interaction stimulates the eif2ak4/gcn2 kinase activity and is impaired by impact upon a variety of stress conditions, such as amino acid depletion, UV-C irradiation, proteasome inhibitor treatment and glucose deprivation. Interacts with impact; this prevents the interaction of gcn1 with eif2ak4/gcn2 and inhibits eif2ak4/gcn2 kinase activity.

It localises to the cytoplasm. Ribosome collision sensor that activates a translation quality control pathway when a ribosome has stalled during translation. Directly binds to the ribosome and acts as a sentinel for colliding ribosomes. Gcn1 also acts as a positive activator of the integrated stress response (ISR) by mediating activation of eif2ak4/gcn2 in response to amino acid starvation. Interaction with eif2ak4/gcn2 on translating ribosomes stimulates eif2ak4/gcn2 kinase activity, leading to phosphorylation of eukaryotic translation initiation factor 2 (eIF-2-alpha/eif2s1). EIF2S1/eIF-2-alpha phosphorylation converts EIF2S1/eIF-2-alpha into a global protein synthesis inhibitor, leading to a global attenuation of cap-dependent translation, and thus to a reduced overall utilization of amino acids, while concomitantly initiating the preferential translation of ISR-specific mRNAs, such as the transcriptional activator atf4, and hence allowing atf4-mediated reprogramming of amino acid biosynthetic gene expression to alleviate nutrient depletion. This Dictyostelium discoideum (Social amoeba) protein is eIF-2-alpha kinase activator GCN1.